The primary structure comprises 171 residues: MTKQHAFTREDLLRCSRGELFGPGNAQLPAPNMLMVDRITHISDEGGKFGKGELVAELDINPDLWFFACHFEGDPVMPGCLGLDAMWQLVGFYLGWQGNPGRGRALGSGEVKFFGQVLPTAKKVTYNIHIKRVLKGKLNLAIADGSVSVDGREIYTAEGLRVGVFTSTENF.

H70 is an active-site residue.

This sequence belongs to the thioester dehydratase family. FabA subfamily. Homodimer.

The protein localises to the cytoplasm. The catalysed reaction is a (3R)-hydroxyacyl-[ACP] = a (2E)-enoyl-[ACP] + H2O. The enzyme catalyses (3R)-hydroxydecanoyl-[ACP] = (2E)-decenoyl-[ACP] + H2O. It catalyses the reaction (2E)-decenoyl-[ACP] = (3Z)-decenoyl-[ACP]. Its pathway is lipid metabolism; fatty acid biosynthesis. Its function is as follows. Necessary for the introduction of cis unsaturation into fatty acids. Catalyzes the dehydration of (3R)-3-hydroxydecanoyl-ACP to E-(2)-decenoyl-ACP and then its isomerization to Z-(3)-decenoyl-ACP. Can catalyze the dehydratase reaction for beta-hydroxyacyl-ACPs with saturated chain lengths up to 16:0, being most active on intermediate chain length. In Pseudomonas syringae pv. syringae (strain B728a), this protein is 3-hydroxydecanoyl-[acyl-carrier-protein] dehydratase.